The chain runs to 1302 residues: 1-phosphatidylinositol 4,5-bisphosphate phosphodiesterase gamma-1 (1302 aa).

Position 2 is an N-acetylalanine (Ala-2). Residues 27–142 (RSLEVGTVMT…WIKGLTWLME (116 aa)) form the PH 1 domain. The region spanning 152 to 187 (QIERWLRKQFYSVDRNREDRISAKDLKNMLSQVNYR) is the EF-hand domain. Ca(2+) is bound by residues Asp-165, Asn-167, Glu-169, Arg-171, and Asp-176. In terms of domain architecture, PI-PLC X-box spans 320 to 464 (DTMNNPLSHY…LRRKILIKHK (145 aa)). Residues His-335 and His-380 contribute to the active site. A PH 2; first part domain is found at 489–523 (SIKNGILYLEDPVNHEWYPHYFVLTSSKIYYSEET). A Phosphotyrosine modification is found at Tyr-506. Positions 522 to 545 (ETSSDQGNEDEEEPKEASSSTELH) are disordered. SH2 domains are found at residues 550–657 (WFHG…SEPV) and 668–756 (WYHA…RYPI). Tyr-771 carries the phosphotyrosine; by SYK modification. Phosphotyrosine is present on Tyr-775. Phosphotyrosine; by ITK, SYK and TXK is present on Tyr-783. The 61-residue stretch at 791-851 (TFKCAVKALF…PSNYVEEMIN (61 aa)) folds into the SH3 domain. A PH 2; second part domain is found at 895 to 931 (FVFSISMPSVAQWSLDVAADSQEELQDWVKKIREVAQ). Residues 953–1070 (LSELVVYCRP…GYVLQPSTMR (118 aa)) form the PI-PLC Y-box domain. Tyr-977 carries the post-translational modification Phosphotyrosine. The region spanning 1071 to 1194 (DEAFDPFDKS…TGYRAVPLKN (124 aa)) is the C2 domain. Residues Ser-1221, Ser-1227, Ser-1233, and Ser-1248 each carry the phosphoserine modification. Tyr-1253 bears the Phosphotyrosine mark. Ser-1263 is modified (phosphoserine).

In terms of assembly, interacts (via SH2 domain) with FGFR1, FGFR2, FGFR3 and FGFR4 (phosphorylated). Interacts with RALGPS1. Interacts (via SH2 domains) with VIL1 (phosphorylated at C-terminus tyrosine phosphorylation sites). Interacts (via SH2 domain) with RET. Interacts with AGAP2 via its SH3 domain. Interacts with LAT (phosphorylated) upon TCR activation. Interacts (via SH3 domain) with the Pro-rich domain of TNK1. Associates with BLNK, VAV1, GRB2 and NCK1 in a B-cell antigen receptor-dependent fashion. Interacts with CBLB in activated T-cells; which inhibits phosphorylation. Interacts with SHB. Interacts (via SH3 domain) with the Arg/Gly-rich-flanked Pro-rich domains of KHDRBS1/SAM68. This interaction is selectively regulated by arginine methylation of KHDRBS1/SAM68. Interacts with INPP5D/SHIP1, THEMIS and CLNK. Interacts with FLT4 and KIT. Interacts with AXL. Interacts with SYK; activates PLCG1. Interacts with FLT1 (tyrosine-phosphorylated). Interacts (via SH2 domain) with PDGFRA and PDGFRB (tyrosine phosphorylated). Interacts with PIP5K1C. Interacts with NTRK1 and NTRK2 (phosphorylated upon ligand-binding). Interacts with TESPA1. Interacts with GRB2, LAT and THEMIS upon TCR activation in thymocytes; the association is weaker in the absence of TESPA1. Interacts (via C-terminal proline-rich domain (PRD)) with PLCG1 (via SH3 domain); this interaction leads to guanine nucleotide exchange from PlCG1 to DNM1 and enhances DNM1-dependent endocytosis. Requires Ca(2+) as cofactor. Post-translationally, tyrosine phosphorylated in response to signaling via activated FLT3, KIT and PDGFRA. Tyrosine phosphorylated by activated FGFR1, FGFR2, FGFR3 and FGFR4. Tyrosine phosphorylated by activated FLT1 and KDR. Tyrosine phosphorylated by activated PDGFRB. The receptor-mediated activation of PLCG1 involves its phosphorylation by tyrosine kinases in response to ligation of a variety of growth factor receptors and immune system receptors. For instance, SYK phosphorylates and activates PLCG1 in response to ligation of the B-cell receptor. Phosphorylated by ITK and TXK on Tyr-783 upon TCR activation in T-cells. May be dephosphorylated by PTPRJ. In terms of processing, ubiquitinated by CBLB in activated T-cells.

It is found in the cell projection. The protein resides in the lamellipodium. Its subcellular location is the ruffle. The enzyme catalyses a 1,2-diacyl-sn-glycero-3-phospho-(1D-myo-inositol-4,5-bisphosphate) + H2O = 1D-myo-inositol 1,4,5-trisphosphate + a 1,2-diacyl-sn-glycerol + H(+). It catalyses the reaction a 1,2-diacyl-sn-glycero-3-phospho-(1D-myo-inositol) + H2O = 1D-myo-inositol 1-phosphate + a 1,2-diacyl-sn-glycerol + H(+). Activated by phosphorylation on tyrosine residues. Mediates the production of the second messenger molecules diacylglycerol (DAG) and inositol 1,4,5-trisphosphate (IP3). Plays an important role in the regulation of intracellular signaling cascades. Becomes activated in response to ligand-mediated activation of receptor-type tyrosine kinases, such as PDGFRA, PDGFRB, EGFR, FGFR1, FGFR2, FGFR3 and FGFR4. Plays a role in actin reorganization and cell migration. Guanine nucleotide exchange factor that binds the GTPase DNM1 and catalyzes the dissociation of GDP, allowing a GTP molecule to bind in its place, therefore enhancing DNM1-dependent endocytosis. This is 1-phosphatidylinositol 4,5-bisphosphate phosphodiesterase gamma-1 from Mus musculus (Mouse).